Here is a 218-residue protein sequence, read N- to C-terminus: Protein Syd (218 aa).

The protein belongs to the Syd family.

Its subcellular location is the cell inner membrane. Its function is as follows. Interacts with the SecY protein in vivo. May bind preferentially to an uncomplexed state of SecY, thus functioning either as a chelating agent for excess SecY in the cell or as a regulatory factor that negatively controls the translocase function. This Shewanella denitrificans (strain OS217 / ATCC BAA-1090 / DSM 15013) protein is Protein Syd.